We begin with the raw amino-acid sequence, 27 residues long: Caerulein precursor fragment R1 (27 aa).

As to expression, expressed by the skin glands.

It localises to the secreted. In terms of biological role, antimicrobial peptide. The protein is Caerulein precursor fragment R1 of Xenopus ruwenzoriensis (Uganda clawed frog).